Reading from the N-terminus, the 251-residue chain is Sugar fermentation stimulation protein homolog (251 aa).

This sequence belongs to the SfsA family.

The chain is Sugar fermentation stimulation protein homolog from Prochlorococcus marinus (strain SARG / CCMP1375 / SS120).